The sequence spans 438 residues: UDP-N-acetylmuramoylalanine--D-glutamate ligase (438 aa).

ATP is bound at residue 112-118 (GSNGKST).

The protein belongs to the MurCDEF family.

It localises to the cytoplasm. It catalyses the reaction UDP-N-acetyl-alpha-D-muramoyl-L-alanine + D-glutamate + ATP = UDP-N-acetyl-alpha-D-muramoyl-L-alanyl-D-glutamate + ADP + phosphate + H(+). It participates in cell wall biogenesis; peptidoglycan biosynthesis. Its function is as follows. Cell wall formation. Catalyzes the addition of glutamate to the nucleotide precursor UDP-N-acetylmuramoyl-L-alanine (UMA). The polypeptide is UDP-N-acetylmuramoylalanine--D-glutamate ligase (Shigella boydii serotype 4 (strain Sb227)).